A 577-amino-acid chain; its full sequence is Aspartate--tRNA ligase (577 aa).

Glutamate 171 is an L-aspartate binding site. The segment at 195–198 (QLFK) is aspartate. An L-aspartate-binding site is contributed by arginine 217. ATP contacts are provided by residues 217 to 219 (RDE) and glutamine 226. An L-aspartate-binding site is contributed by histidine 437. Position 472 (glutamate 472) interacts with ATP. Residue arginine 479 participates in L-aspartate binding. 524–527 (GFDR) contributes to the ATP binding site.

The protein belongs to the class-II aminoacyl-tRNA synthetase family. Type 1 subfamily. As to quaternary structure, homodimer.

It is found in the cytoplasm. The catalysed reaction is tRNA(Asp) + L-aspartate + ATP = L-aspartyl-tRNA(Asp) + AMP + diphosphate. Catalyzes the attachment of L-aspartate to tRNA(Asp) in a two-step reaction: L-aspartate is first activated by ATP to form Asp-AMP and then transferred to the acceptor end of tRNA(Asp). The sequence is that of Aspartate--tRNA ligase from Deinococcus geothermalis (strain DSM 11300 / CIP 105573 / AG-3a).